The chain runs to 286 residues: Putative WUSCHEL-related homeobox 2 (286 aa).

Disordered stretches follow at residues 1–25 (MAPAVQQQQSGGGGGSTGAAAVGST) and 128–152 (SSSSSCGGGLNEDANSLLSPTSPTT). The homeobox; WUS-type DNA-binding region spans 23-87 (GSTTRWCPTP…NHKARDRQKL (65 aa)).

The protein belongs to the WUS homeobox family.

The protein resides in the nucleus. In terms of biological role, transcription factor which may be involved in developmental processes. This Oryza sativa subsp. indica (Rice) protein is Putative WUSCHEL-related homeobox 2 (WOX2).